Here is a 760-residue protein sequence, read N- to C-terminus: MEDDGRLAPRQIWARPTSTTTRSYVPGCTPFLLPSDGYVYLNRTYSISLGENAIYDPACTSTPTTTEHAGAALDIHDPFYASVTPLLYAMGCATVVSYLLVIILLITPRTFYVGGPGGGANFLGRHGMVSGSYSNNSSVVGVGGRPWLQKVAALLVAISLTIATADSFRVAEKQYDHGYSDAEALTSEVIDGTEIKVVRIISSTFLWLAQVQTLIRLFPRHKEKVMIKWAGFALIVLDTIFAILDKFLVKTNTTRPRLYEDAIPALSYLFELALNLLYAAWVIFYSLSKHRFAFFHPKMRNICLVALLSLCAVLIPVVFFVLDIAKPEIAGWGTYIRWVGSAAASVVVWEWVERIEALERDERKDGILGREVFDGDEMIEVTPSEEVDWPRQQFHGHDRGGGTGMSSAWGGVMGLAHRPLRPRGGRITQTQREAEGATAAKSRKRRSARPTPPPAAVTPVSRADTTSAASTVYNVHYYPVSSPTPPVAMPFMEEEDEGSDGDGEKELAVVQNQQSSLPTQDTYTEPRRQNSPQIVNVDNRWRFILNPFKNRHAALPREVASAQAEEEGFLSPDDQAPRQGDEENPHYTPRHRGLFSFHPMSDGASRRQSGADQPLPVTVIPARRRGQDTWSPQWFTNSNLVDRSSSRRTASRPRDQRMKVIQPQVQSAAPWTAADMEASFSSMDYELRYDPEAAALVSEDIPDHHSQPTQADSPAHPTMSGGNGPSGGETQSALDTGPGIEGSVNEGSVIEGPEESHSQR.

Over 1 to 85 (MEDDGRLAPR…HDPFYASVTP (85 aa)) the chain is Extracellular. Residues 86 to 106 (LLYAMGCATVVSYLLVIILLI) form a helical membrane-spanning segment. Residues 107–150 (TPRTFYVGGPGGGANFLGRHGMVSGSYSNNSSVVGVGGRPWLQK) lie on the Cytoplasmic side of the membrane. A helical transmembrane segment spans residues 151 to 171 (VAALLVAISLTIATADSFRVA). Residues 172 to 194 (EKQYDHGYSDAEALTSEVIDGTE) lie on the Extracellular side of the membrane. The helical transmembrane segment at 195–215 (IKVVRIISSTFLWLAQVQTLI) threads the bilayer. Topologically, residues 216-228 (RLFPRHKEKVMIK) are cytoplasmic. The helical transmembrane segment at 229 to 249 (WAGFALIVLDTIFAILDKFLV) threads the bilayer. The Extracellular portion of the chain corresponds to 250 to 262 (KTNTTRPRLYEDA). A helical membrane pass occupies residues 263–283 (IPALSYLFELALNLLYAAWVI). Topologically, residues 284–301 (FYSLSKHRFAFFHPKMRN) are cytoplasmic. Residues 302–322 (ICLVALLSLCAVLIPVVFFVL) traverse the membrane as a helical segment. Over 323–328 (DIAKPE) the chain is Extracellular. The chain crosses the membrane as a helical span at residues 329–349 (IAGWGTYIRWVGSAAASVVVW). The Cytoplasmic portion of the chain corresponds to 350-760 (EWVERIEALE…EGPEESHSQR (411 aa)). 5 disordered regions span residues 389–465 (WPRQ…RADT), 479–503 (PVSS…DGDG), 559–615 (VASA…DQPL), 629–666 (TWSP…PQVQ), and 696–760 (LVSE…HSQR). Over residues 492-501 (MEEEDEGSDG) the composition is skewed to acidic residues. Positions 575–585 (QAPRQGDEENP) are enriched in basic and acidic residues. The span at 629–642 (TWSPQWFTNSNLVD) shows a compositional bias: polar residues.

It belongs to the palH/RIM21 family.

It localises to the cell membrane. Required for the proteolytic cleavage of the transcription factor pacC in response to alkaline ambient pH. Might be a pH sensor. The protein is pH-response regulator protein palH/RIM21 (palH) of Emericella nidulans (strain FGSC A4 / ATCC 38163 / CBS 112.46 / NRRL 194 / M139) (Aspergillus nidulans).